We begin with the raw amino-acid sequence, 86 residues long: Large ribosomal subunit protein bL27 (86 aa).

Belongs to the bacterial ribosomal protein bL27 family.

The sequence is that of Large ribosomal subunit protein bL27 from Flavobacterium johnsoniae (strain ATCC 17061 / DSM 2064 / JCM 8514 / BCRC 14874 / CCUG 350202 / NBRC 14942 / NCIMB 11054 / UW101) (Cytophaga johnsonae).